A 99-amino-acid chain; its full sequence is NADH-quinone oxidoreductase subunit K (99 aa).

3 helical membrane passes run 3-23, 28-48, and 59-79; these read PDNY…GVLL, IVMF…FVTF, and VVAF…LAII.

This sequence belongs to the complex I subunit 4L family. In terms of assembly, NDH-1 is composed of 14 different subunits. Subunits NuoA, H, J, K, L, M, N constitute the membrane sector of the complex.

The protein resides in the cell membrane. It catalyses the reaction a quinone + NADH + 5 H(+)(in) = a quinol + NAD(+) + 4 H(+)(out). Functionally, NDH-1 shuttles electrons from NADH, via FMN and iron-sulfur (Fe-S) centers, to quinones in the respiratory chain. The immediate electron acceptor for the enzyme in this species is believed to be a menaquinone. Couples the redox reaction to proton translocation (for every two electrons transferred, four hydrogen ions are translocated across the cytoplasmic membrane), and thus conserves the redox energy in a proton gradient. This Mycolicibacterium gilvum (strain PYR-GCK) (Mycobacterium gilvum (strain PYR-GCK)) protein is NADH-quinone oxidoreductase subunit K.